The sequence spans 238 residues: Ubiquinone biosynthesis O-methyltransferase (238 aa).

S-adenosyl-L-methionine is bound by residues Arg-36, Gly-56, Asp-77, and Met-125.

Belongs to the methyltransferase superfamily. UbiG/COQ3 family.

It carries out the reaction a 3-demethylubiquinol + S-adenosyl-L-methionine = a ubiquinol + S-adenosyl-L-homocysteine + H(+). It catalyses the reaction a 3-(all-trans-polyprenyl)benzene-1,2-diol + S-adenosyl-L-methionine = a 2-methoxy-6-(all-trans-polyprenyl)phenol + S-adenosyl-L-homocysteine + H(+). It functions in the pathway cofactor biosynthesis; ubiquinone biosynthesis. Its function is as follows. O-methyltransferase that catalyzes the 2 O-methylation steps in the ubiquinone biosynthetic pathway. The sequence is that of Ubiquinone biosynthesis O-methyltransferase from Histophilus somni (strain 2336) (Haemophilus somnus).